A 54-amino-acid polypeptide reads, in one-letter code: Rubredoxin (54 aa).

At methionine 1 the chain carries N-formylmethionine. Residues methionine 1 to glutamate 54 enclose the Rubredoxin-like domain. Fe cation-binding residues include cysteine 6, cysteine 9, cysteine 39, and cysteine 42.

This sequence belongs to the rubredoxin family. The cofactor is Fe(3+).

Its function is as follows. Rubredoxin is a small nonheme, iron protein lacking acid-labile sulfide. Its single Fe, chelated to 4 Cys, functions as an electron acceptor and may also stabilize the conformation of the molecule. In Clostridium pasteurianum, this protein is Rubredoxin.